The chain runs to 434 residues: MGIKNLKSLLLENKSLTILDDNLYKVYNGIFVDTMSIYIAVANCVRNLEELTTVFIKYVNGWVKKGGHVTLFIDRGSIKIKQDVRDKRRKYSKLTKDRKMLELEKCTSEIQNVTGFMEEEIKAEMQLKIDKLTFQIYLSDSDNIKISLNEILTHFNNNENVTLFYCDERDAEFVMCLEAKTHFSTTGEWPLIISTDQDTMLFASADNHPKMIKNLTQLFKYVPSAEDNYLAKLTALVNGCDFFPGLYGASITPNNLNKIQLFSDFTIDNIVTSLAIKNYYRKTNSTVDVRNIVTFINDYANLDDVYSYIPPCQCTVQEFIFSALDEKWNEFKSSYLESVPLPCQLMYALEPRKEIDVSEVKTLSSYIDFENTKSDIDVIKSISSIFGYSNENCNTIVFGIYKDNLLLSINSSFYFNDSLLITNTKSDNIINIGY.

Mg(2+) contacts are provided by Asp33, Asp74, Glu168, Asp170, Asp196, and Asp198.

This sequence belongs to the XPG/RAD2 endonuclease family. FEN1 subfamily. The cofactor is Mg(2+).

It localises to the virion. Functionally, putative nuclease that seems to be required for double-strand break repair, homologous recombination, and production of full-length viral genomic DNA. This Vaccinia virus (strain Western Reserve) (VACV) protein is Putative nuclease OPG089 (OPG089).